The primary structure comprises 618 residues: Elongation factor 4 (618 aa).

The region spanning 17-198 is the tr-type G domain; sequence AIIRNFCIIA…KIVRDLPAPE (182 aa). GTP contacts are provided by residues 29-34 and 145-148; these read DHGKST and NKID.

It belongs to the TRAFAC class translation factor GTPase superfamily. Classic translation factor GTPase family. LepA subfamily.

It is found in the cell membrane. It carries out the reaction GTP + H2O = GDP + phosphate + H(+). Required for accurate and efficient protein synthesis under certain stress conditions. May act as a fidelity factor of the translation reaction, by catalyzing a one-codon backward translocation of tRNAs on improperly translocated ribosomes. Back-translocation proceeds from a post-translocation (POST) complex to a pre-translocation (PRE) complex, thus giving elongation factor G a second chance to translocate the tRNAs correctly. Binds to ribosomes in a GTP-dependent manner. The protein is Elongation factor 4 of Pseudarthrobacter chlorophenolicus (strain ATCC 700700 / DSM 12829 / CIP 107037 / JCM 12360 / KCTC 9906 / NCIMB 13794 / A6) (Arthrobacter chlorophenolicus).